The following is a 397-amino-acid chain: MNAGSDPVVIVSAARTAIGSFNGALSTVPVHEMGTTVIKEVLQRAKVAPEEVSEVIFGHVLTAGCGQNPTRQASVGAGIPYSVPAWSCQMICGSGLKAVCLAAQSIAMGDSTIVVAGGMENMSKAPHLTHLRTGVRMGEVPLADSILCDGLTDAFHNYHMGITAENVAKKWQVSREAQDKVAVLSQNRAEHAQKAGHFDKEIVPVLVSSRKGLTEVKIDEFPRHGSNLEAMGKLKPYFLTDGTGTVTPANASGMNDGAAAVVLMKKTEAERRMLKPLARIVSWSQAGVEPSVMGVGPIPAIKQAVAKAGWSLEDVDLFEINEAFAAVSAAIAKELGLNPEKVNIDGGAIALGHPLGASGCRILVTLLHTLERVGGTRGVAALCIGGGMGVAMCVQRG.

Position 1 is an N-acetylmethionine (methionine 1). Residue cysteine 92 is the Acyl-thioester intermediate of the active site. Residue lysine 200 is modified to N6-acetyllysine. CoA contacts are provided by arginine 223 and serine 226. N6-acetyllysine occurs at positions 233 and 235. A CoA-binding site is contributed by serine 252. The Proton donor/acceptor role is filled by cysteine 383.

This sequence belongs to the thiolase-like superfamily. Thiolase family. In terms of assembly, homotetramer.

It localises to the cytoplasm. Its subcellular location is the cytosol. The catalysed reaction is 2 acetyl-CoA = acetoacetyl-CoA + CoA. Its pathway is lipid metabolism; fatty acid metabolism. Its function is as follows. Involved in the biosynthetic pathway of cholesterol. This is Acetyl-CoA acetyltransferase, cytosolic (Acat2) from Mus musculus (Mouse).